The following is a 656-amino-acid chain: Methylenetetrahydrofolate reductase (NADPH) (656 aa).

The segment at 1 to 46 (MVNEARGNDSLNPCLEGSASSSSESSKDSSRCSTPGLDPERHERLR) is disordered. Phosphoserine occurs at positions 10, 18, 20, 21, 23, 25, 26, 29, and 30. A Phosphothreonine modification is found at Thr34. Glu63 acts as the Proton donor/acceptor in catalysis. NAD(+) is bound by residues 63–68 (EFFPPR) and 94–95 (TW). Thr94 is modified (phosphothreonine). An FAD-binding site is contributed by 94–95 (TW). Ser103 carries the post-translational modification Phosphoserine. Residues His127, 157–159 (RGD), 174–175 (YA), Tyr197, 201–204 (HPEA), Asp210, and Lys217 contribute to the FAD site. Asp159 is a substrate binding site. Positions 228, 321, and 325 each coordinate substrate. Ser394 is subject to Phosphoserine. Thr451 is subject to Phosphothreonine. Residues Asn456, 461–464 (AAET), 481–485 (TINSQ), Thr560, and Thr573 contribute to the S-adenosyl-L-methionine site.

The protein belongs to the methylenetetrahydrofolate reductase family. In terms of assembly, homodimer. The cofactor is FAD. Post-translationally, phosphorylation of an N-terminal serine-rich phosphorylation region increases sensitivity to S-adenosylmethionine and inhibition.

The catalysed reaction is (6S)-5-methyl-5,6,7,8-tetrahydrofolate + NADP(+) = (6R)-5,10-methylene-5,6,7,8-tetrahydrofolate + NADPH + H(+). The protein operates within one-carbon metabolism; tetrahydrofolate interconversion. Allosterically regulated by S-adenosylmethionine (SAM). Its function is as follows. Catalyzes the conversion of 5,10-methylenetetrahydrofolate to 5-methyltetrahydrofolate, a cosubstrate for homocysteine remethylation to methionine. Represents a key regulatory connection between the folate and methionine cycles. This chain is Methylenetetrahydrofolate reductase (NADPH) (MTHFR), found in Macaca fascicularis (Crab-eating macaque).